Reading from the N-terminus, the 502-residue chain is Arabinose import ATP-binding protein AraG (502 aa).

ABC transporter domains lie at 6 to 241 (LEFD…MVGR) and 252 to 497 (REVG…MVES). ATP is bound at residue 38 to 45 (GENGAGKS).

Belongs to the ABC transporter superfamily. Arabinose importer (TC 3.A.1.2.2) family. The complex is composed of two ATP-binding proteins (AraG), two transmembrane proteins (AraH) and a solute-binding protein (AraF).

It is found in the cell inner membrane. It carries out the reaction L-arabinose(out) + ATP + H2O = L-arabinose(in) + ADP + phosphate + H(+). Part of the ABC transporter complex AraFGH involved in arabinose import. Responsible for energy coupling to the transport system. The sequence is that of Arabinose import ATP-binding protein AraG from Mannheimia succiniciproducens (strain KCTC 0769BP / MBEL55E).